We begin with the raw amino-acid sequence, 117 residues long: Translation initiation factor 1A (117 aa).

Positions 17–92 (IRVPLPDRSK…ERGDIVYRYT (76 aa)) constitute an S1-like domain.

Belongs to the eIF-1A family.

Seems to be required for maximal rate of protein biosynthesis. Enhances ribosome dissociation into subunits and stabilizes the binding of the initiator Met-tRNA(I) to 40 S ribosomal subunits. The polypeptide is Translation initiation factor 1A (Thermococcus kodakarensis (strain ATCC BAA-918 / JCM 12380 / KOD1) (Pyrococcus kodakaraensis (strain KOD1))).